The following is a 300-amino-acid chain: Very-long-chain enoyl-CoA reductase (300 aa).

A helical membrane pass occupies residues 91–111; it reads SLVFICEYAGPLFVYPIFYFL. Asn163 is a glycosylation site (N-linked (GlcNAc...) asparagine). The chain crosses the membrane as a helical span at residues 191–211; sequence VYLGLGLWIIGEVFNYICHIQ. Asn238 carries N-linked (GlcNAc...) asparagine glycosylation. Residues 243–263 form a helical membrane-spanning segment; it reads ILSWIGFSILTQTLTSWIFAL.

It belongs to the steroid 5-alpha reductase family.

It is found in the endoplasmic reticulum membrane. It catalyses the reaction a very-long-chain 2,3-saturated fatty acyl-CoA + NADP(+) = a very-long-chain (2E)-enoyl-CoA + NADPH + H(+). It functions in the pathway lipid metabolism; fatty acid biosynthesis. Functionally, catalyzes the last of the four reactions of the long-chain fatty acids elongation cycle. This endoplasmic reticulum-bound enzymatic process, allows the addition of 2 carbons to the chain of long- and very long-chain fatty acids/VLCFAs per cycle. This enzyme reduces the trans-2,3-enoyl-CoA fatty acid intermediate to an acyl-CoA that can be further elongated by entering a new cycle of elongation. Thereby, it participates in the production of VLCFAs of different chain lengths that are involved in multiple biological processes as precursors of membrane lipids and lipid mediators. The sequence is that of Very-long-chain enoyl-CoA reductase (gpsn2) from Dictyostelium discoideum (Social amoeba).